The sequence spans 394 residues: 1-deoxy-D-xylulose 5-phosphate reductoisomerase (394 aa).

Positions 10, 11, 12, 13, 38, 39, 40, and 123 each coordinate NADPH. 1-deoxy-D-xylulose 5-phosphate is bound at residue K124. E125 is an NADPH binding site. D149 is a Mn(2+) binding site. The 1-deoxy-D-xylulose 5-phosphate site is built by S150, E151, S175, and H198. E151 lines the Mn(2+) pocket. G204 contacts NADPH. 1-deoxy-D-xylulose 5-phosphate is bound by residues S211, N216, K217, and E220. E220 contacts Mn(2+).

The protein belongs to the DXR family. It depends on Mg(2+) as a cofactor. The cofactor is Mn(2+).

It catalyses the reaction 2-C-methyl-D-erythritol 4-phosphate + NADP(+) = 1-deoxy-D-xylulose 5-phosphate + NADPH + H(+). It functions in the pathway isoprenoid biosynthesis; isopentenyl diphosphate biosynthesis via DXP pathway; isopentenyl diphosphate from 1-deoxy-D-xylulose 5-phosphate: step 1/6. Its function is as follows. Catalyzes the NADPH-dependent rearrangement and reduction of 1-deoxy-D-xylulose-5-phosphate (DXP) to 2-C-methyl-D-erythritol 4-phosphate (MEP). The protein is 1-deoxy-D-xylulose 5-phosphate reductoisomerase of Cereibacter sphaeroides (strain ATCC 17023 / DSM 158 / JCM 6121 / CCUG 31486 / LMG 2827 / NBRC 12203 / NCIMB 8253 / ATH 2.4.1.) (Rhodobacter sphaeroides).